The sequence spans 362 residues: Mannose-1-phosphate guanyltransferase (362 aa).

The protein belongs to the transferase hexapeptide repeat family.

The protein resides in the cytoplasm. The catalysed reaction is alpha-D-mannose 1-phosphate + GTP + H(+) = GDP-alpha-D-mannose + diphosphate. Its pathway is nucleotide-sugar biosynthesis; GDP-alpha-D-mannose biosynthesis; GDP-alpha-D-mannose from alpha-D-mannose 1-phosphate (GTP route): step 1/1. In terms of biological role, involved in cell wall synthesis where it is required for glycosylation. Involved in cell cycle progression through cell-size checkpoint. The polypeptide is Mannose-1-phosphate guanyltransferase (MPG1) (Candida albicans (strain SC5314 / ATCC MYA-2876) (Yeast)).